Consider the following 409-residue polypeptide: Na(+)-translocating NADH-quinone reductase subunit F (409 aa).

The helical transmembrane segment at 5–25 threads the bilayer; sequence FIFGIGAFTAIVLVLAVVILI. The 2Fe-2S ferredoxin-type domain maps to 34–128; that stretch reads GDITISINDD…SMDVELPEEV (95 aa). [2Fe-2S] cluster contacts are provided by Cys71, Cys77, Cys80, and Cys112. In terms of domain architecture, FAD-binding FR-type spans 131-271; it reads VKKWECTVIS…SGPFGEFFAK (141 aa).

Belongs to the NqrF family. In terms of assembly, composed of six subunits; NqrA, NqrB, NqrC, NqrD, NqrE and NqrF. [2Fe-2S] cluster serves as cofactor. Requires FAD as cofactor.

The protein localises to the cell inner membrane. The catalysed reaction is a ubiquinone + n Na(+)(in) + NADH + H(+) = a ubiquinol + n Na(+)(out) + NAD(+). In terms of biological role, NQR complex catalyzes the reduction of ubiquinone-1 to ubiquinol by two successive reactions, coupled with the transport of Na(+) ions from the cytoplasm to the periplasm. The first step is catalyzed by NqrF, which accepts electrons from NADH and reduces ubiquinone-1 to ubisemiquinone by a one-electron transfer pathway. This is Na(+)-translocating NADH-quinone reductase subunit F from Actinobacillus succinogenes (strain ATCC 55618 / DSM 22257 / CCUG 43843 / 130Z).